A 402-amino-acid polypeptide reads, in one-letter code: Protein FAM53A (402 aa).

At Ser-119 the chain carries Phosphoserine. The tract at residues 170-215 is disordered; it reads LVPGLPRRPVSPAGPTSPLTPRPASASSGFVDGSEGSTSSGPPWLS. Residues 273-281 carry the Nuclear localization signal motif; sequence RRVRRKRRR. Ser-306 and Ser-309 each carry phosphoserine. Over residues 323–333 the composition is skewed to polar residues; that stretch reads TLVSSPCNSQG. The segment at 323 to 402 is disordered; that stretch reads TLVSSPCNSQ…DLDLEQIENN (80 aa). Over residues 336-345 the composition is skewed to low complexity; it reads GIITPSSSPR.

It belongs to the FAM53 family.

It localises to the nucleus. Functionally, may play an important role in neural development; the dorsomedial roof of the third ventricle. The sequence is that of Protein FAM53A from Mus musculus (Mouse).